The chain runs to 80 residues: Bowman-Birk type proteinase inhibitor (80 aa).

7 cysteine pairs are disulfide-bonded: Cys-19–Cys-70, Cys-20–Cys-35, Cys-23–Cys-66, Cys-25–Cys-33, Cys-41–Cys-47, Cys-44–Cys-59, and Cys-49–Cys-57.

In terms of assembly, occurs as a monomer, dimer or trimer. The dimer may be the active form. Post-translationally, binds calcium, probably through His-3 to His-6.

Its function is as follows. Protease inhibitor with activity against cysteine, aspartic and serine proteases. Highest activity against serine proteases, in particular trypsin and trypsin-like proteases. The chain is Bowman-Birk type proteinase inhibitor from Phaseolus acutifolius (Tepary bean).